The sequence spans 210 residues: 3-hexulose-6-phosphate synthase 1 (210 aa).

It belongs to the HPS/KGPDC family. HPS subfamily.

It carries out the reaction D-ribulose 5-phosphate + formaldehyde = D-arabino-hex-3-ulose 6-phosphate. The protein operates within one-carbon metabolism; formaldehyde assimilation via RuMP pathway; D-fructose 6-phosphate from D-ribulose 5-phosphate and formaldehyde: step 1/2. Catalyzes the condensation of ribulose 5-phosphate with formaldehyde to form 3-hexulose 6-phosphate. The protein is 3-hexulose-6-phosphate synthase 1 of Staphylococcus saprophyticus subsp. saprophyticus (strain ATCC 15305 / DSM 20229 / NCIMB 8711 / NCTC 7292 / S-41).